A 227-amino-acid polypeptide reads, in one-letter code: ATP synthase F(0) complex subunit a (227 aa).

Helical transmembrane passes span 14–34 (FLGI…IPTP), 73–93 (LASL…PYIF), 98–118 (QLSL…LIGM), 137–157 (ALIP…PLAL), 179–199 (VFVL…LLLL), and 203–223 (LEVA…SLYL).

It belongs to the ATPase A chain family. As to quaternary structure, component of the ATP synthase complex composed at least of ATP5F1A/subunit alpha, ATP5F1B/subunit beta, ATP5MC1/subunit c (homooctomer), MT-ATP6/subunit a, MT-ATP8/subunit 8, ATP5ME/subunit e, ATP5MF/subunit f, ATP5MG/subunit g, ATP5MK/subunit k, ATP5MJ/subunit j, ATP5F1C/subunit gamma, ATP5F1D/subunit delta, ATP5F1E/subunit epsilon, ATP5PF/subunit F6, ATP5PB/subunit b, ATP5PD/subunit d, ATP5PO/subunit OSCP. ATP synthase complex consists of a soluble F(1) head domain (subunits alpha(3) and beta(3)) - the catalytic core - and a membrane F(0) domain - the membrane proton channel (subunits c, a, 8, e, f, g, k and j). These two domains are linked by a central stalk (subunits gamma, delta, and epsilon) rotating inside the F1 region and a stationary peripheral stalk (subunits F6, b, d, and OSCP). Interacts with DNAJC30; interaction is direct.

It is found in the mitochondrion inner membrane. It catalyses the reaction H(+)(in) = H(+)(out). In terms of biological role, subunit a, of the mitochondrial membrane ATP synthase complex (F(1)F(0) ATP synthase or Complex V) that produces ATP from ADP in the presence of a proton gradient across the membrane which is generated by electron transport complexes of the respiratory chain. ATP synthase complex consist of a soluble F(1) head domain - the catalytic core - and a membrane F(1) domain - the membrane proton channel. These two domains are linked by a central stalk rotating inside the F(1) region and a stationary peripheral stalk. During catalysis, ATP synthesis in the catalytic domain of F(1) is coupled via a rotary mechanism of the central stalk subunits to proton translocation. With the subunit c (ATP5MC1), forms the proton-conducting channel in the F(0) domain, that contains two crucial half-channels (inlet and outlet) that facilitate proton movement from the mitochondrial intermembrane space (IMS) into the matrix. Protons are taken up via the inlet half-channel and released through the outlet half-channel, following a Grotthuss mechanism. In Gadus morhua (Atlantic cod), this protein is ATP synthase F(0) complex subunit a.